The following is a 129-amino-acid chain: Transcriptional activator protein (129 aa).

A compositionally biased stretch (low complexity) spans 1 to 12; that stretch reads MRSSSPSQPPSI. Residues 1 to 21 form a disordered region; sequence MRSSSPSQPPSIKKAHRQAKR. The Nuclear localization signal motif lies at 13–28; that stretch reads KKAHRQAKRRAIRRRR. A zinc finger lies at 33 to 50; sequence CGCSIYFHIDCTGHGFTH. Residues 84–114 form a disordered region; it reads IHQNEDIPCTNTVQPQPEESVASPQSLPELP. A compositionally biased stretch (polar residues) spans 92-109; the sequence is CTNTVQPQPEESVASPQS. A transactivation region spans residues 115–129; that stretch reads SLDDFDDSFWVNLFK.

Belongs to the geminiviridae transcriptional activator protein family. As to quaternary structure, monomer. Homodimer. Homooligomer. Self-interaction correlates with nuclear localization and efficient activation of transcription. Monomers suppress local silencing by interacting with and inactivating host adenosine kinase 2 (ADK2) in the cytoplasm. Interacts with and inhibits host SNF1 kinase. Binds to ssDNA. Post-translationally, phosphorylated.

The protein localises to the host nucleus. The protein resides in the host cytoplasm. Functionally, strong activator of the late viral genes promoters. Enhances the expression of the capsid protein and nuclear shuttle protein. Acts as a suppressor of RNA-mediated gene silencing, also known as post-transcriptional gene silencing (PTGS), a mechanism of plant viral defense that limits the accumulation of viral RNAs. Suppresses the host RNA silencing by inhibiting adenosine kinase 2 (ADK2), a kinase involved in a general methylation pathway. Also suppresses the host basal defense by interacting with and inhibiting SNF1 kinase, a key regulator of cell metabolism implicated in innate antiviral defense. Determines pathogenicity. The sequence is that of Transcriptional activator protein from Abutilon (Upland cotton).